We begin with the raw amino-acid sequence, 476 residues long: Bifunctional protein HldE (476 aa).

The interval 1 to 318 is ribokinase; sequence MKVTLPDFRR…ENAIRGRAET (318 aa). Residue 195–198 participates in ATP binding; that stretch reads NLSE. Residue Asp-264 is part of the active site. The segment at 344–476 is cytidylyltransferase; it reads MTNGIFDILH…IIQSIKNGRG (133 aa).

In the N-terminal section; belongs to the carbohydrate kinase PfkB family. This sequence in the C-terminal section; belongs to the cytidylyltransferase family. Homodimer.

It catalyses the reaction D-glycero-beta-D-manno-heptose 7-phosphate + ATP = D-glycero-beta-D-manno-heptose 1,7-bisphosphate + ADP + H(+). It carries out the reaction D-glycero-beta-D-manno-heptose 1-phosphate + ATP + H(+) = ADP-D-glycero-beta-D-manno-heptose + diphosphate. The protein operates within nucleotide-sugar biosynthesis; ADP-L-glycero-beta-D-manno-heptose biosynthesis; ADP-L-glycero-beta-D-manno-heptose from D-glycero-beta-D-manno-heptose 7-phosphate: step 1/4. Its pathway is nucleotide-sugar biosynthesis; ADP-L-glycero-beta-D-manno-heptose biosynthesis; ADP-L-glycero-beta-D-manno-heptose from D-glycero-beta-D-manno-heptose 7-phosphate: step 3/4. Its function is as follows. Catalyzes the phosphorylation of D-glycero-D-manno-heptose 7-phosphate at the C-1 position to selectively form D-glycero-beta-D-manno-heptose-1,7-bisphosphate. Functionally, catalyzes the ADP transfer from ATP to D-glycero-beta-D-manno-heptose 1-phosphate, yielding ADP-D-glycero-beta-D-manno-heptose. This Yersinia pseudotuberculosis serotype O:1b (strain IP 31758) protein is Bifunctional protein HldE.